Here is a 332-residue protein sequence, read N- to C-terminus: Beta-ketoacyl-[acyl-carrier-protein] synthase III 2 (332 aa).

Catalysis depends on residues Cys115 and His252. The ACP-binding stretch occupies residues 253 to 257 (SANLR). The active site involves Asn282.

The protein belongs to the thiolase-like superfamily. FabH family. Homodimer.

Its subcellular location is the cytoplasm. The enzyme catalyses malonyl-[ACP] + acetyl-CoA + H(+) = 3-oxobutanoyl-[ACP] + CO2 + CoA. It participates in lipid metabolism; fatty acid biosynthesis. Its function is as follows. Catalyzes the condensation reaction of fatty acid synthesis by the addition to an acyl acceptor of two carbons from malonyl-ACP. Catalyzes the first condensation reaction which initiates fatty acid synthesis and may therefore play a role in governing the total rate of fatty acid production. Possesses both acetoacetyl-ACP synthase and acetyl transacylase activities. Its substrate specificity determines the biosynthesis of branched-chain and/or straight-chain of fatty acids. The chain is Beta-ketoacyl-[acyl-carrier-protein] synthase III 2 from Halalkalibacterium halodurans (strain ATCC BAA-125 / DSM 18197 / FERM 7344 / JCM 9153 / C-125) (Bacillus halodurans).